Reading from the N-terminus, the 469-residue chain is 3-isopropylmalate dehydratase large subunit (469 aa).

Residues Cys-347, Cys-408, and Cys-411 each coordinate [4Fe-4S] cluster.

Belongs to the aconitase/IPM isomerase family. LeuC type 1 subfamily. As to quaternary structure, heterodimer of LeuC and LeuD. It depends on [4Fe-4S] cluster as a cofactor.

The catalysed reaction is (2R,3S)-3-isopropylmalate = (2S)-2-isopropylmalate. Its pathway is amino-acid biosynthesis; L-leucine biosynthesis; L-leucine from 3-methyl-2-oxobutanoate: step 2/4. In terms of biological role, catalyzes the isomerization between 2-isopropylmalate and 3-isopropylmalate, via the formation of 2-isopropylmaleate. This Haemophilus influenzae (strain PittEE) protein is 3-isopropylmalate dehydratase large subunit.